A 476-amino-acid polypeptide reads, in one-letter code: Glutamate mutase epsilon subunit (476 aa).

An L-glutamate-binding site is contributed by arginine 62. Glycine 64 contributes to the adenosylcob(III)alamin binding site. An L-glutamate-binding site is contributed by arginine 96. An adenosylcob(III)alamin-binding site is contributed by asparagine 119. Residues 145-146 (RH), glutamate 167, and tyrosine 173 each bind L-glutamate. Residue proline 176 coordinates adenosylcob(III)alamin. Tyrosine 177 contacts L-glutamate. Residues phenylalanine 289, lysine 318, and glutamate 322 each contribute to the adenosylcob(III)alamin site.

The protein belongs to the methylaspartate mutase GlmE subunit family. Heterotetramer composed of 2 epsilon subunits (GlmE) and 2 sigma subunits (GlmS). GlmE exists as a homodimer and GlmS as a monomer. The cofactor is adenosylcob(III)alamin.

The enzyme catalyses (2S,3S)-3-methyl-L-aspartate = L-glutamate. It functions in the pathway amino-acid degradation; L-glutamate degradation via mesaconate pathway; acetate and pyruvate from L-glutamate: step 1/4. In terms of biological role, catalyzes the carbon skeleton rearrangement of L-glutamate to L-threo-3-methylaspartate ((2S,3S)-3-methylaspartate). In Halobacterium salinarum (strain ATCC 700922 / JCM 11081 / NRC-1) (Halobacterium halobium), this protein is Glutamate mutase epsilon subunit.